We begin with the raw amino-acid sequence, 761 residues long: Cytoplasmic export protein 1 (761 aa).

HEAT repeat units follow at residues Ile-385–Glu-423 and Asn-498–Leu-534. Disordered regions lie at residues Asp-660–Ser-692 and Ser-714–Trp-761. 2 stretches are compositionally biased toward polar residues: residues Pro-680–Ser-692 and Ser-714–Gly-737. The segment covering Gly-747 to Trp-761 has biased composition (acidic residues). A Phosphoserine modification is found at Ser-754.

In terms of assembly, associates with the nuclear pore complex (NPC). Interacts with GSP1, LOS1, MSN5, NUP116 and TEF2.

The protein resides in the cytoplasm. Its function is as follows. Component of the nuclear tRNA export machinery that my collect tRNA from the nuclear tRNA export receptors of the aminoacylation-dependent export and may deliver aminoacylated tRNAs to the translation machinery pathway at the nuclear pore complex. The polypeptide is Cytoplasmic export protein 1 (CEX1) (Saccharomyces cerevisiae (strain ATCC 204508 / S288c) (Baker's yeast)).